The following is a 590-amino-acid chain: Enhancer of polycomb-like protein 1 (590 aa).

Disordered regions lie at residues 302–335 and 471–497; these read DEDL…PVRS and TPPR…EPPV. Over residues 475 to 488 the composition is skewed to basic and acidic residues; it reads ELGEDRSDRWKYDS.

Belongs to the enhancer of polycomb family. As to quaternary structure, component of the NuA4 histone acetyltransferase complex.

Its subcellular location is the nucleus. In terms of biological role, component of the NuA4 histone acetyltransferase complex which is involved in transcriptional activation of selected genes principally by acetylation of nucleosomal histone H4 and H2A. The NuA4 complex is also involved in DNA repair. Involved in gene silencing by neighboring heterochromatin, blockage of the silencing spreading along the chromosome, and required for cell cycle progression through G2/M. This chain is Enhancer of polycomb-like protein 1 (EPL1), found in Gibberella zeae (strain ATCC MYA-4620 / CBS 123657 / FGSC 9075 / NRRL 31084 / PH-1) (Wheat head blight fungus).